We begin with the raw amino-acid sequence, 261 residues long: Gap junction beta-6 protein (261 aa).

At 1–22 the chain is on the cytoplasmic side; the sequence is MDWGTLHTFVGGVNKHSTSIGK. A helical transmembrane segment spans residues 23 to 45; sequence VWVTVLFVFRVMILVVAAQEVWG. The Extracellular portion of the chain corresponds to 46 to 75; sequence DEQEDFVCNTLQPGCRNVCYDHFFPVSHIR. Residues 76–98 traverse the membrane as a helical segment; sequence LWALQLIFVSTPALLVAMHVAYY. Residues 99–131 are Cytoplasmic-facing; it reads RHEAARRFRRGETRSEFKDLEDIKRQKVRIEGS. A helical transmembrane segment spans residues 132–154; sequence LWWTYTSSIFFRIVFEAAFMYVF. Residues 155–192 lie on the Extracellular side of the membrane; that stretch reads YFLYNGYHLPWVLKCGIQPCPNLVDCFISRPTEKTVFT. Residues 193 to 215 form a helical membrane-spanning segment; it reads IFMISASVICMLLNVAELCYLLL. Topologically, residues 216–261 are cytoplasmic; it reads KVCFRRSKRAQTQKAPPNHALKESKQNEMNELISEGGQNAITGFPS.

Belongs to the connexin family. Beta-type (group I) subfamily. A connexon is composed of a hexamer of connexins. Interacts with CNST.

It localises to the cell membrane. The protein localises to the cell junction. Its subcellular location is the gap junction. One gap junction consists of a cluster of closely packed pairs of transmembrane channels, the connexons, through which materials of low MW diffuse from one cell to a neighboring cell. This Bos taurus (Bovine) protein is Gap junction beta-6 protein (GJB6).